Consider the following 560-residue polypeptide: CTP synthase (560 aa).

Residues 1 to 272 form an amidoligase domain region; sequence MSIGDVCSAR…DTQILSHFGM (272 aa). Ser20 contacts CTP. Residue Ser20 coordinates UTP. ATP is bound by residues 21 to 26 and Asp78; that span reads SLGKGL. Residues Asp78 and Glu146 each coordinate Mg(2+). CTP contacts are provided by residues 153-155, 193-198, and Lys229; these read DIE and KTKPTQ. UTP is bound by residues 193 to 198 and Lys229; that span reads KTKPTQ. The region spanning 297–539 is the Glutamine amidotransferase type-1 domain; the sequence is TIAIIGKYTK…VQNVLQIKQR (243 aa). Gly356 is an L-glutamine binding site. The active-site Nucleophile; for glutamine hydrolysis is the Cys383. Residues 384–387, Glu407, and Arg467 each bind L-glutamine; that span reads MGMQ. Catalysis depends on residues His512 and Glu514.

Belongs to the CTP synthase family. Homotetramer.

The catalysed reaction is UTP + L-glutamine + ATP + H2O = CTP + L-glutamate + ADP + phosphate + 2 H(+). It carries out the reaction L-glutamine + H2O = L-glutamate + NH4(+). It catalyses the reaction UTP + NH4(+) + ATP = CTP + ADP + phosphate + 2 H(+). It functions in the pathway pyrimidine metabolism; CTP biosynthesis via de novo pathway; CTP from UDP: step 2/2. With respect to regulation, allosterically activated by GTP, when glutamine is the substrate; GTP has no effect on the reaction when ammonia is the substrate. The allosteric effector GTP functions by stabilizing the protein conformation that binds the tetrahedral intermediate(s) formed during glutamine hydrolysis. Inhibited by the product CTP, via allosteric rather than competitive inhibition. Its function is as follows. Catalyzes the ATP-dependent amination of UTP to CTP with either L-glutamine or ammonia as the source of nitrogen. Regulates intracellular CTP levels through interactions with the four ribonucleotide triphosphates. The protein is CTP synthase of Anaplasma marginale (strain Florida).